The chain runs to 233 residues: Biosynthetic peptidoglycan transglycosylase (233 aa).

The helical transmembrane segment at L8 to I28 threads the bilayer.

It belongs to the glycosyltransferase 51 family.

It localises to the cell inner membrane. It carries out the reaction [GlcNAc-(1-&gt;4)-Mur2Ac(oyl-L-Ala-gamma-D-Glu-L-Lys-D-Ala-D-Ala)](n)-di-trans,octa-cis-undecaprenyl diphosphate + beta-D-GlcNAc-(1-&gt;4)-Mur2Ac(oyl-L-Ala-gamma-D-Glu-L-Lys-D-Ala-D-Ala)-di-trans,octa-cis-undecaprenyl diphosphate = [GlcNAc-(1-&gt;4)-Mur2Ac(oyl-L-Ala-gamma-D-Glu-L-Lys-D-Ala-D-Ala)](n+1)-di-trans,octa-cis-undecaprenyl diphosphate + di-trans,octa-cis-undecaprenyl diphosphate + H(+). Its pathway is cell wall biogenesis; peptidoglycan biosynthesis. Functionally, peptidoglycan polymerase that catalyzes glycan chain elongation from lipid-linked precursors. The protein is Biosynthetic peptidoglycan transglycosylase of Neisseria gonorrhoeae (strain NCCP11945).